Here is an 89-residue protein sequence, read N- to C-terminus: Cell division topological specificity factor (89 aa).

This sequence belongs to the MinE family.

Functionally, prevents the cell division inhibition by proteins MinC and MinD at internal division sites while permitting inhibition at polar sites. This ensures cell division at the proper site by restricting the formation of a division septum at the midpoint of the long axis of the cell. This is Cell division topological specificity factor from Pectobacterium atrosepticum (strain SCRI 1043 / ATCC BAA-672) (Erwinia carotovora subsp. atroseptica).